Reading from the N-terminus, the 152-residue chain is 3-dehydroquinate dehydratase (152 aa).

Tyr23 acts as the Proton acceptor in catalysis. Residues Asn74, His80, and Asp87 each contribute to the substrate site. His100 serves as the catalytic Proton donor. Substrate is bound by residues 101-102 (LS) and Arg111.

Belongs to the type-II 3-dehydroquinase family. Homododecamer.

It catalyses the reaction 3-dehydroquinate = 3-dehydroshikimate + H2O. It functions in the pathway metabolic intermediate biosynthesis; chorismate biosynthesis; chorismate from D-erythrose 4-phosphate and phosphoenolpyruvate: step 3/7. In terms of biological role, catalyzes a trans-dehydration via an enolate intermediate. The polypeptide is 3-dehydroquinate dehydratase (Clostridium botulinum (strain Langeland / NCTC 10281 / Type F)).